The primary structure comprises 234 residues: Sugar fermentation stimulation protein homolog (234 aa).

This sequence belongs to the SfsA family.

This is Sugar fermentation stimulation protein homolog from Enterobacter sp. (strain 638).